Here is a 383-residue protein sequence, read N- to C-terminus: G-protein coupled receptor E1 (383 aa).

9 helical membrane-spanning segments follow: residues 13 to 35, 78 to 98, 109 to 129, 160 to 180, 190 to 210, 242 to 262, 279 to 299, 323 to 343, and 351 to 371; these read SSLA…TTIA, LYLL…IIVI, MLLL…PFWM, VFCI…AVTA, IVTC…EFFF, VIML…YVII, LIFV…IVLL, LITK…YAFV, and LYHF…PFLS. Residues cysteine 145 and cysteine 222 are joined by a disulfide bond.

This sequence belongs to the G-protein coupled receptor 1 family.

The protein localises to the host membrane. This chain is G-protein coupled receptor E1 (E1), found in Equine herpesvirus 2 (strain 86/87) (EHV-2).